Reading from the N-terminus, the 87-residue chain is Large ribosomal subunit protein eL31 (87 aa).

It belongs to the eukaryotic ribosomal protein eL31 family.

The polypeptide is Large ribosomal subunit protein eL31 (Methanoculleus marisnigri (strain ATCC 35101 / DSM 1498 / JR1)).